Here is a 155-residue protein sequence, read N- to C-terminus: Small ribosomal subunit protein uS7cz/uS7cy (155 aa).

It belongs to the universal ribosomal protein uS7 family. Part of the 30S ribosomal subunit.

The protein localises to the plastid. It localises to the chloroplast. Its function is as follows. One of the primary rRNA binding proteins, it binds directly to 16S rRNA where it nucleates assembly of the head domain of the 30S subunit. In Lotus japonicus (Lotus corniculatus var. japonicus), this protein is Small ribosomal subunit protein uS7cz/uS7cy (rps7-A).